Here is a 290-residue protein sequence, read N- to C-terminus: Agmatinase (290 aa).

Residues His-112, Asp-135, His-137, Asp-139, Asp-216, and Asp-218 each contribute to the Mn(2+) site.

Belongs to the arginase family. Agmatinase subfamily. Mn(2+) is required as a cofactor.

The catalysed reaction is agmatine + H2O = urea + putrescine. It functions in the pathway amine and polyamine biosynthesis; putrescine biosynthesis via agmatine pathway; putrescine from agmatine: step 1/1. Its function is as follows. Catalyzes the formation of putrescine from agmatine. The polypeptide is Agmatinase (speB) (Bacillus cereus (strain ATCC 14579 / DSM 31 / CCUG 7414 / JCM 2152 / NBRC 15305 / NCIMB 9373 / NCTC 2599 / NRRL B-3711)).